Here is a 151-residue protein sequence, read N- to C-terminus: DNA-directed RNA polymerase RPB6 homolog (151 aa).

Residues 20–44 (ETEEENFVDSEEESEDKSEDKDEIV) show a composition bias toward acidic residues. Residues 20–46 (ETEEENFVDSEEESEDKSEDKDEIVES) form a disordered region.

Belongs to the archaeal RpoK/eukaryotic RPB6 RNA polymerase subunit family. As to quaternary structure, part of the viral DNA-directed RNA polymerase that consists of 8 polII-like subunits (RPB1, RPB2, RPB3, RPB5, RPB6, RPB7, RPB9, RPB10), a capping enzyme and a termination factor.

It is found in the host cytoplasm. Its subcellular location is the virion. Its function is as follows. Component of the DNA-directed RNA polymerase (RNAP) that catalyzes the transcription in the cytoplasm of viral DNA into RNA using the four ribonucleoside triphosphates as substrates. The protein is DNA-directed RNA polymerase RPB6 homolog of African swine fever virus (isolate Tick/Malawi/Lil 20-1/1983) (ASFV).